A 140-amino-acid chain; its full sequence is Hexon-interlacing protein (140 aa).

Positions 100 to 127 form a coiled coil; sequence LTALLAQLDSLTRELNVVSQQLLDLRQQ.

This sequence belongs to the adenoviridae hexon-interlacing protein family. Homotrimer. Interacts with hexon protein; this interaction tethers the hexons together. Self-interacts with adjacent proteins. Interacts with kinesin light chain KLC1; this interaction leads to capsid disruption at the nuclear pore complex during virus entry into host cell.

It is found in the virion. It localises to the host nucleus. Its function is as follows. Structural component of the virion that acts as a cement protein on the capsid exterior and forms triskelion structures consisting of three molecules that stabilize three hexon trimers at the center of each icosahedral facet and fixes the peripentonal hexons. Dispensable for assembly. During virus entry, recruits the anterograde motor kinesin-1 to the capsid docked at the nuclear pore complex thereby subjecting the docked capsid to a pulling force. The resulting tension leads to capsid disruption, dispersion of capsid fragments toward cell periphery and eventually viral DNA entry into the host nucleus. This is Hexon-interlacing protein from Human adenovirus C serotype 5 (HAdV-5).